A 225-amino-acid polypeptide reads, in one-letter code: Glutathione S-transferase U3 (225 aa).

Positions 6–86 constitute a GST N-terminal domain; the sequence is EGVKLIGSWA…YIDQTWTNNP (81 aa). Glutathione is bound by residues 16 to 17, 43 to 44, 57 to 58, and 70 to 71; these read SP, VK, KV, and ES. The GST C-terminal domain maps to 91 to 218; that stretch reads SPYDKAMARF…EKHIEHMMKI (128 aa). Thr-152 is modified (phosphothreonine).

It belongs to the GST superfamily. Tau family.

It localises to the cytoplasm. It is found in the cytosol. It catalyses the reaction RX + glutathione = an S-substituted glutathione + a halide anion + H(+). Functionally, may be involved in the conjugation of reduced glutathione to a wide number of exogenous and endogenous hydrophobic electrophiles and have a detoxification role against certain herbicides. The polypeptide is Glutathione S-transferase U3 (GSTU3) (Arabidopsis thaliana (Mouse-ear cress)).